Reading from the N-terminus, the 426-residue chain is Histidine--tRNA ligase (426 aa).

It belongs to the class-II aminoacyl-tRNA synthetase family. As to quaternary structure, homodimer.

It localises to the cytoplasm. It catalyses the reaction tRNA(His) + L-histidine + ATP = L-histidyl-tRNA(His) + AMP + diphosphate + H(+). The polypeptide is Histidine--tRNA ligase (Streptococcus pyogenes serotype M18 (strain MGAS8232)).